We begin with the raw amino-acid sequence, 474 residues long: Glutathione synthetase (474 aa).

At Ala2 the chain carries N-acetylalanine. Residue Arg125 coordinates substrate. An ATP-binding site is contributed by Glu144. Mg(2+) is bound by residues Glu144 and Asn146. Residues 148-151, 214-216, Gln220, and 267-270 contribute to the substrate site; these read ISAS, ERN, and RDGY. ATP contacts are provided by residues Lys305, 364–373, Tyr375, and 398–401; these read KPQREGGGNN and MEKI. Glu368 provides a ligand contact to Mg(2+). Ser415 is modified (phosphoserine). Residue Glu425 coordinates ATP. Arg450 is a substrate binding site. The ATP site is built by Lys452 and Asp458. Residue 461-462 coordinates substrate; sequence VA.

The protein belongs to the eukaryotic GSH synthase family. As to quaternary structure, homodimer. Requires Mg(2+) as cofactor.

It catalyses the reaction gamma-L-glutamyl-L-cysteine + glycine + ATP = glutathione + ADP + phosphate + H(+). The catalysed reaction is gamma-L-glutamyl-(2S)-2-aminobutanoate + glycine + ATP = ophthalmate + ADP + phosphate + H(+). The protein operates within sulfur metabolism; glutathione biosynthesis; glutathione from L-cysteine and L-glutamate: step 2/2. Its function is as follows. Catalyzes the production of glutathione from gamma-glutamylcysteine and glycine in an ATP-dependent manner. Glutathione (gamma-glutamylcysteinylglycine, GSH) is the most abundant intracellular thiol in living aerobic cells and is required for numerous processes including the protection of cells against oxidative damage, amino acid transport, the detoxification of foreign compounds, the maintenance of protein sulfhydryl groups in a reduced state and acts as a cofactor for a number of enzymes. Participates in ophthalmate biosynthesis in hepatocytes. The polypeptide is Glutathione synthetase (Homo sapiens (Human)).